Reading from the N-terminus, the 321-residue chain is Ferredoxin--NADP reductase (321 aa).

Asp-28, Gln-36, Tyr-41, Ala-81, Phe-115, Asp-274, and Ser-315 together coordinate FAD.

Belongs to the ferredoxin--NADP reductase type 2 family. In terms of assembly, homodimer. Requires FAD as cofactor.

The catalysed reaction is 2 reduced [2Fe-2S]-[ferredoxin] + NADP(+) + H(+) = 2 oxidized [2Fe-2S]-[ferredoxin] + NADPH. The chain is Ferredoxin--NADP reductase from Frankia casuarinae (strain DSM 45818 / CECT 9043 / HFP020203 / CcI3).